The sequence spans 1168 residues: DNA-directed RNA polymerase subunit beta (1168 aa).

It belongs to the RNA polymerase beta chain family. As to quaternary structure, the RNAP catalytic core consists of 2 alpha, 1 beta, 1 beta' and 1 omega subunit. When a sigma factor is associated with the core the holoenzyme is formed, which can initiate transcription.

It carries out the reaction RNA(n) + a ribonucleoside 5'-triphosphate = RNA(n+1) + diphosphate. DNA-dependent RNA polymerase catalyzes the transcription of DNA into RNA using the four ribonucleoside triphosphates as substrates. The sequence is that of DNA-directed RNA polymerase subunit beta from Corynebacterium kroppenstedtii (strain DSM 44385 / JCM 11950 / CIP 105744 / CCUG 35717).